Here is a 551-residue protein sequence, read N- to C-terminus: ETS domain-containing transcription factor ERF (551 aa).

Phosphothreonine is present on residues Thr3 and Thr7. A phosphoserine mark is found at Ser20 and Ser24. Residues 27 to 107 (IQLWHFILEL…KGKRFTYKFN (81 aa)) constitute a DNA-binding region (ETS). 2 disordered regions span residues 130-169 (QSAP…SSSS) and 184-304 (GSVS…SHFS). 2 positions are modified to phosphoserine: Ser185 and Ser190. Positions 239–250 (RGGPEPLSPFPV) are enriched in pro residues. The segment covering 251–268 (SPLAGPGSLLPPQLSPAL) has biased composition (low complexity). Residues 289–301 (SGGGGPSGSGGGS) are compositionally biased toward gly residues. At Ser327 the chain carries Phosphoserine. Residues 342–476 (PQRPDKCPLP…KPEPGEAPGV (135 aa)) form a disordered region. The span at 348 to 361 (CPLPPMAPETPPVP) shows a compositional bias: pro residues. Over residues 362-373 (SSASSSSSSSSS) the composition is skewed to low complexity. The segment covering 404–413 (GGSGSGGLAE) has biased composition (gly residues). Ser433 and Ser437 each carry phosphoserine. A compositionally biased stretch (acidic residues) spans 433–453 (SEGESEEVEVTDISDEDEEDG). A Phosphothreonine modification is found at Thr443. Ser446 carries the phosphoserine modification. Glycyl lysine isopeptide (Lys-Gly) (interchain with G-Cter in SUMO2) cross-links involve residues Lys467, Lys483, and Lys514. A disordered region spans residues 495-551 (RLEGGGCLSGGPEDEGEDKKVRGDVGPGESGGPLTPRRVSSDLQHATAQLSLEHRDS). Residue Thr529 is modified to Phosphothreonine; by MAPK1. Ser534, Ser535, and Ser551 each carry phosphoserine. Residues 535-544 (SDLQHATAQL) are compositionally biased toward polar residues.

This sequence belongs to the ETS family. Phosphorylated by multiple kinases including MAPK1/ERK2 at THR-529. Phosphorylation regulates the activity of ERF. As to expression, expressed along the osteogenic margins of the developing calvarial bones, in a similar distribution to that observed for the master osteogenic regulator RUNX2.

The protein localises to the nucleus. Functionally, potent transcriptional repressor that binds to the H1 element of the Ets2 promoter. May regulate other genes involved in cellular proliferation. Required for extraembryonic ectoderm differentiation, ectoplacental cone cavity closure, and chorioallantoic attachment. May be important for regulating trophoblast stem cell differentiation. In Mus musculus (Mouse), this protein is ETS domain-containing transcription factor ERF (Erf).